A 312-amino-acid polypeptide reads, in one-letter code: Phosphatidate cytidylyltransferase (312 aa).

Positions 1–31 are disordered; that stretch reads MASTDPGTGTPLDESVPGIKRAMRQSTKNTP. Helical transmembrane passes span 37-57, 58-78, 85-105, 110-130, 157-177, 186-206, 223-243, and 247-267; these read LPAA…TLVF, APRI…HEVV, GYVI…WLTW, VGAL…RLVM, ATVF…LLVY, FCLM…GVLF, GFAG…TFLA, and PWVG…GDLV.

The protein belongs to the CDS family.

The protein localises to the cell membrane. The enzyme catalyses a 1,2-diacyl-sn-glycero-3-phosphate + CTP + H(+) = a CDP-1,2-diacyl-sn-glycerol + diphosphate. The protein operates within phospholipid metabolism; CDP-diacylglycerol biosynthesis; CDP-diacylglycerol from sn-glycerol 3-phosphate: step 3/3. The sequence is that of Phosphatidate cytidylyltransferase (cdsA) from Mycobacterium leprae (strain TN).